A 201-amino-acid chain; its full sequence is MQINLQTDGGGPNRPPFLLPGYPESFPVNDTRPQHTGLEGRIAELIAPGLESIGYELVRVAIMGKQTPTVQIMADRADQTPLSLDDCERISHLVSAVLDVDDPISSAWTLEVSSAGIDRPLTRVKDWNRYAGHLARIDLDVPTASGRKRLTGTVLGADEAQARVKLDSGETVDLPHAHIRRAKLVLTEELIKATETPPAAN.

Belongs to the RimP family.

It localises to the cytoplasm. Functionally, required for maturation of 30S ribosomal subunits. This Acidiphilium cryptum (strain JF-5) protein is Ribosome maturation factor RimP.